Here is a 464-residue protein sequence, read N- to C-terminus: NADH dehydrogenase [ubiquinone] flavoprotein 1, mitochondrial (464 aa).

A mitochondrion-targeting transit peptide spans 1-20 (MLATRRLLGWSLPARVSVRF). Residue lysine 81 is modified to N6-acetyllysine; alternate. Lysine 81 carries the post-translational modification N6-succinyllysine; alternate. 87–96 (GRGGAGFPTG) contributes to the NADH binding site. Lysine 104 carries the N6-acetyllysine modification. Residue 199–247 (RGAGAYICGEETALIESIEGKQGKPRLKPPFPADVGVFGCPTTVANVET) participates in FMN binding. Arginine 257 bears the Omega-N-methylarginine mark. Lysine 375 is subject to N6-acetyllysine. [4Fe-4S] cluster is bound by residues cysteine 379, cysteine 382, cysteine 385, and cysteine 425.

The protein belongs to the complex I 51 kDa subunit family. As to quaternary structure, core subunit of respiratory chain NADH dehydrogenase (Complex I) which is composed of 45 different subunits. This is a component of the flavoprotein-sulfur (FP) fragment of the enzyme. Interacts with RAB5IF. It depends on FMN as a cofactor. Requires [4Fe-4S] cluster as cofactor.

It is found in the mitochondrion inner membrane. The catalysed reaction is a ubiquinone + NADH + 5 H(+)(in) = a ubiquinol + NAD(+) + 4 H(+)(out). Core subunit of the mitochondrial membrane respiratory chain NADH dehydrogenase (Complex I) which catalyzes electron transfer from NADH through the respiratory chain, using ubiquinone as an electron acceptor. Part of the peripheral arm of the enzyme, where the electrons from NADH are accepted by flavin mononucleotide (FMN) and then passed along a chain of iron-sulfur clusters by electron tunnelling to the final acceptor ubiquinone. Contains FMN, which is the initial electron acceptor as well as one iron-sulfur cluster. The sequence is that of NADH dehydrogenase [ubiquinone] flavoprotein 1, mitochondrial from Homo sapiens (Human).